A 385-amino-acid chain; its full sequence is U6 small nuclear RNA (adenine-(43)-N(6))-methyltransferase (385 aa).

Positions 54, 83, 106, and 155 each coordinate S-adenosyl-L-methionine.

This sequence belongs to the methyltransferase superfamily. METTL16/RlmF family.

It is found in the cytoplasm. Its subcellular location is the nucleus. It carries out the reaction adenosine in U6 snRNA + S-adenosyl-L-methionine = N(6)-methyladenosine in U6 snRNA + S-adenosyl-L-homocysteine + H(+). Its function is as follows. RNA N6-methyltransferase that mediates N6-methylation of adenine of U6 small nuclear RNA (U6 snRNA). The sequence is that of U6 small nuclear RNA (adenine-(43)-N(6))-methyltransferase from Schizosaccharomyces pombe (strain 972 / ATCC 24843) (Fission yeast).